The primary structure comprises 95 residues: MPKRKSPENAEGKDGAKLTKQEPTRRSARLSAKPVPPKPEPKPRKTSAKKEPGTKINRAAKGKKEEKQEAGKEGTAPSANGDTKAEEVLSTNASH.

Composition is skewed to basic and acidic residues over residues 1-25 (MPKR…EPTR), 39-53 (PEPK…KEPG), and 62-72 (GKKEEKQEAGK). The segment at 1 to 95 (MPKRKSPENA…EEVLSTNASH (95 aa)) is disordered. Residue serine 6 is modified to Phosphoserine. The residue at position 78 (serine 78) is a Phosphoserine.

Belongs to the HMGN family. Interacts with the ligand binding domain of the thyroid receptor (TR) (in vitro). Requires the presence of thyroid hormone for its interaction. Interacts with transcriptional regulator SEHBP. Interacts with nucleosomes.

Its subcellular location is the nucleus. Binds to nucleosomes, regulating chromatin structure and consequently, chromatin-dependent processes such as transcription, DNA replication and DNA repair. Affects both insulin and glucagon levels and modulates the expression of pancreatic genes involved in insulin secretion. Regulates the expression of the glucose transporter SLC2A2 by binding specifically to its promoter region and recruiting PDX1 and additional transcription factors. Regulates the expression of SLC6A9, a glycine transporter which regulates the glycine concentration in synaptic junctions in the central nervous system, by binding to its transcription start site. May play a role in ocular development and astrocyte function. This chain is High mobility group nucleosome-binding domain-containing protein 3 (Hmgn3), found in Rattus norvegicus (Rat).